The following is a 456-amino-acid chain: High mobility group B protein 6 (456 aa).

Disordered regions lie at residues 1 to 42 (MATN…KSAK), 117 to 142 (SSLTQAEQEKANKKKKKDCPETKRPS), 238 to 258 (AEQDNKKKNKKEKDPLKPKHP), and 349 to 389 (MLKK…YFLF). Positions 11–21 (KKPRNSRKALK) are enriched in basic residues. The segment at residues 138–206 (TKRPSSSYVL…AYLQVIAKEK (69 aa)) is a DNA-binding region (HMG box 1). Over residues 240-254 (QDNKKKNKKEKDPLK) the composition is skewed to basic and acidic residues. Residues 255 to 321 (PKHPVSAFLV…TYLQAMEEYK (67 aa)) constitute a DNA-binding region (HMG box 2). Residues 354–363 (EKTDNLIKKE) show a composition bias toward basic and acidic residues. The segment at residues 379-447 (PKKPASSYFL…AYKKEVEAYN (69 aa)) is a DNA-binding region (HMG box 3).

It is found in the nucleus. The polypeptide is High mobility group B protein 6 (HMGB6) (Arabidopsis thaliana (Mouse-ear cress)).